The primary structure comprises 764 residues: MKNILKILILILICINKINCLDGDGKQFRMIMLLSANVNDMGFNNMMNQGRIGVSKNLQIEDSRLIVVDGENDTKALVEPILQNEDIDFVICSSQGHTVACKYFADKYLKHPTVKTQFLIRGSGSSTANLIQFNYNFASCNYMSGYFAGLHTKTNKIGFLSPGAPKVNDAWVYAFWLGAKQVNPKIQFFYYNVGAFLNPDASERATNDLLERGCDVIGNTLDDFSSGITIMSKGYRTIGTNGFPQKLIYGEKILYSYAYNWTKLFLPIAMSVKAGITNNTNGYGDFNLDESKNFFNIEYSYGVSTDTINRMNQQITFLKSNSRFTHPYYCNEYLPEYTKKNNLNLSTSPTVNNLICIDHSTFLKINPPFPGMTYLGIYNISLVEVEFSQSIQNGFSITTGILIGITILMMIGIIKYSKTPSMRSASPIFLNFILAGGIIVYIGIIVWVGPMSTHSCNARLWLVTLGFSTLIGSLVVKNFRIWLIFDNPELKSIKITNYQLFPWVGACLVINIILMAILTSVGDLKQIDAMNIDSLGKYEYMKVCKMNSSGASTLYTILAYFAALLLVGVFVSWKIRIVDILEFNESGAIANTLYAISFCLFVIVPLMISPQDMQSETIILCTTGLFITTAALLIIFIPKFWRVFRKGANDSEINFNKKKSSSVATARAESGSKGSNGNASSGNRTNRRGNVVSGDFTDDSESSVGDENQKEKEKIKDDVANVTSGAVLAEFTDEASDTDNNEFNDIELSEQPPSIIVNDSENNN.

A signal peptide spans Met-1 to Cys-20. The Extracellular segment spans residues Leu-21–Asn-393. 5 N-linked (GlcNAc...) asparagine glycosylation sites follow: Asn-72, Asn-260, Asn-278, Asn-344, and Asn-379. A helical transmembrane segment spans residues Gly-394–Ile-414. Residues Lys-415–Pro-427 are Cytoplasmic-facing. The chain crosses the membrane as a helical span at residues Ile-428–Val-448. The Extracellular portion of the chain corresponds to Gly-449 to Thr-464. A helical membrane pass occupies residues Leu-465 to Phe-485. Residues Asp-486–Leu-500 lie on the Cytoplasmic side of the membrane. A helical transmembrane segment spans residues Phe-501–Val-521. Residues Gly-522–Ser-552 lie on the Extracellular side of the membrane. An N-linked (GlcNAc...) asparagine glycan is attached at Asn-547. The helical transmembrane segment at Thr-553 to Trp-573 threads the bilayer. The Cytoplasmic portion of the chain corresponds to Lys-574–Gly-587. The chain crosses the membrane as a helical span at residues Ala-588–Ile-608. Topologically, residues Ser-609 to Thr-617 are extracellular. A helical transmembrane segment spans residues Ile-618 to Pro-638. Residues Lys-639–Asn-764 lie on the Cytoplasmic side of the membrane. Residues Ala-664–Asn-764 form a disordered region. Over residues Gly-671 to Asn-690 the composition is skewed to low complexity. The segment covering Glu-707–Val-719 has biased composition (basic and acidic residues). The span at Phe-731–Leu-748 shows a compositional bias: acidic residues.

This sequence in the N-terminal section; belongs to the BMP lipoprotein family. The protein in the C-terminal section; belongs to the G-protein coupled receptor 3 family. GABA-B receptor subfamily.

The protein localises to the membrane. The polypeptide is Metabotropic glutamate receptor-like protein H (grlH) (Dictyostelium discoideum (Social amoeba)).